The primary structure comprises 221 residues: UPF0502 protein PA14_19450 (221 aa).

It belongs to the UPF0502 family.

The polypeptide is UPF0502 protein PA14_19450 (Pseudomonas aeruginosa (strain UCBPP-PA14)).